The chain runs to 453 residues: Bis(5'-adenosyl)-triphosphatase ENPP4 (453 aa).

Positions 1–15 are cleaved as a signal peptide; the sequence is MKLLVILLFSGLITG. Residues 16-407 are Extracellular-facing; it reads FRSDSSSSLP…DQWCINLPEA (392 aa). Positions 34 and 70 each coordinate Zn(2+). T70 acts as the AMP-threonine intermediate in catalysis. Substrate is bound by residues N91 and Y154. N-linked (GlcNAc...) asparagine glycosylation is found at N155 and N166. Residues D189, H193, D237, and H238 each contribute to the Zn(2+) site. Residue D189 participates in substrate binding. Residues C254 and C287 are joined by a disulfide bond. N-linked (GlcNAc...) asparagine glycosylation occurs at N276. Residue H336 participates in Zn(2+) binding. N-linked (GlcNAc...) asparagine glycosylation occurs at N386. C394 and C401 are disulfide-bonded. The helical transmembrane segment at 408-428 threads the bilayer; the sequence is IAIVIGSLLVLTMLTCLIIIM. Over 429-453 the chain is Cytoplasmic; it reads QNRLSVPRPFSRLQLQEDDDDPLIG.

It belongs to the nucleotide pyrophosphatase/phosphodiesterase family. The cofactor is Zn(2+). In terms of tissue distribution, expressed on the surface of vascular endothelia.

The protein localises to the cell membrane. It carries out the reaction P(1),P(3)-bis(5'-adenosyl) triphosphate + H2O = AMP + ADP + 2 H(+). In terms of biological role, hydrolyzes extracellular Ap3A into AMP and ADP, and Ap4A into AMP and ATP. Ap3A and Ap4A are diadenosine polyphosphates thought to induce proliferation of vascular smooth muscle cells. Acts as a procoagulant, mediating platelet aggregation at the site of nascent thrombus via release of ADP from Ap3A and activation of ADP receptors. The polypeptide is Bis(5'-adenosyl)-triphosphatase ENPP4 (ENPP4) (Homo sapiens (Human)).